Consider the following 495-residue polypeptide: PXA domain protein 1 (495 aa).

The region spanning 1-174 is the PXA domain; the sequence is MAKLSSLLNP…KFIIYLSKAI (174 aa). 2 consecutive transmembrane segments (helical) span residues 7–27 and 235–255; these read LLNP…YSGI and WFFF…FVAE. Composition is skewed to polar residues over residues 402–419 and 427–436; these read AVSS…QRSF and DSQTPSENSA. The disordered stretch occupies residues 402–436; sequence AVSSPTKANTNKSHQRSFSIPKATKDSQTPSENSA. Residues 446–466 traverse the membrane as a helical segment; the sequence is AYSQIPVIPFFLPSDKLIMLV.

The protein resides in the endosome membrane. In terms of biological role, required for required for normal vacuolar morphology and for vacuolar protein transport. Also required for endosome-to-Golgi protein transport. In Schizosaccharomyces pombe (strain 972 / ATCC 24843) (Fission yeast), this protein is PXA domain protein 1 (pxa1).